The sequence spans 509 residues: ATP synthase subunit alpha (509 aa).

169 to 176 contacts ATP; that stretch reads GDRKTGKT.

It belongs to the ATPase alpha/beta chains family. As to quaternary structure, F-type ATPases have 2 components, CF(1) - the catalytic core - and CF(0) - the membrane proton channel. CF(1) has five subunits: alpha(3), beta(3), gamma(1), delta(1), epsilon(1). CF(0) has three main subunits: a(1), b(2) and c(9-12). The alpha and beta chains form an alternating ring which encloses part of the gamma chain. CF(1) is attached to CF(0) by a central stalk formed by the gamma and epsilon chains, while a peripheral stalk is formed by the delta and b chains.

It localises to the cell membrane. It catalyses the reaction ATP + H2O + 4 H(+)(in) = ADP + phosphate + 5 H(+)(out). Functionally, produces ATP from ADP in the presence of a proton gradient across the membrane. The alpha chain is a regulatory subunit. This Lacticaseibacillus casei (strain BL23) (Lactobacillus casei) protein is ATP synthase subunit alpha.